A 193-amino-acid chain; its full sequence is MAAEQVEDYCISFVEMKFINNTLYFVAENDEDLESDHFGKLEPKLSIIRNLNDQVLFINQGNQPVFEDMPDSDCSDNAPQTIFIIYMYKDSLTRGLAVTISVQCKKMSTLSCENKIVSFKEMNPPDNIDNEESDIIFFQRSVPGHDDKIQFESSLYKGYFLACKKENDLFKLILKKQDDNRDKSVMFTVQNQN.

A propeptide spanning residues 1–36 (MAAEQVEDYCISFVEMKFINNTLYFVAENDEDLESD) is cleaved from the precursor.

It belongs to the IL-1 family. In terms of assembly, forms a ternary complex with ligand-binding receptor subunit IL18R1 and signaling receptor subunit IL18RAP at the plasma membrane. Mature IL18 first binds to IL18R1 forming a low affinity binary complex, which then interacts with IL18RAP to form a high affinity ternary complex that signals inside the cell. Interacts with cargo receptor TMED10; the interaction mediates the translocation from the cytoplasm into the ERGIC (endoplasmic reticulum-Golgi intermediate compartment) and thereby secretion. In terms of processing, the pro-IL-18 precursor is processed by CASP1, CASP4 or CASP5 to yield its mature, active form. The pro-IL-18 precursor features autoinhibitory interactions between the propeptide and the post-cleavage-site region, preventing recognition by the IL18R1 receptor. Processing by CASP1, CASP4 or CASP5 induces conformational changes to generate critical receptor-binding sites. The mature form is then secreted and released in the extracellular milieu by passing through the gasdermin-D (GSDMD) pore. In contrast, cleavage by CASP3 inactivates IL18.

It localises to the cytoplasm. It is found in the cytosol. The protein resides in the secreted. Pro-inflammatory cytokine primarily involved in epithelial barrier repair, polarized T-helper 1 (Th1) cell and natural killer (NK) cell immune responses. Upon binding to IL18R1 and IL18RAP, forms a signaling ternary complex which activates NF-kappa-B, triggering synthesis of inflammatory mediators. Synergizes with IL12/interleukin-12 to induce IFNG synthesis from T-helper 1 (Th1) cells and natural killer (NK) cells. Involved in transduction of inflammation downstream of pyroptosis: its mature form is specifically released in the extracellular milieu by passing through the gasdermin-D (GSDMD) pore. The chain is Interleukin-18 (IL18) from Bos taurus (Bovine).